The primary structure comprises 168 residues: ATP synthase subunit b (168 aa).

The helical transmembrane segment at 9 to 29 (AIPFGTIAYTLFIFLILLVML) threads the bilayer.

The protein belongs to the ATPase B chain family. In terms of assembly, F-type ATPases have 2 components, F(1) - the catalytic core - and F(0) - the membrane proton channel. F(1) has five subunits: alpha(3), beta(3), gamma(1), delta(1), epsilon(1). F(0) has three main subunits: a(1), b(2) and c(10-14). The alpha and beta chains form an alternating ring which encloses part of the gamma chain. F(1) is attached to F(0) by a central stalk formed by the gamma and epsilon chains, while a peripheral stalk is formed by the delta and b chains.

It is found in the cell membrane. Its function is as follows. F(1)F(0) ATP synthase produces ATP from ADP in the presence of a proton or sodium gradient. F-type ATPases consist of two structural domains, F(1) containing the extramembraneous catalytic core and F(0) containing the membrane proton channel, linked together by a central stalk and a peripheral stalk. During catalysis, ATP synthesis in the catalytic domain of F(1) is coupled via a rotary mechanism of the central stalk subunits to proton translocation. Component of the F(0) channel, it forms part of the peripheral stalk, linking F(1) to F(0). This chain is ATP synthase subunit b, found in Bacillus cereus (strain G9842).